Here is a 113-residue protein sequence, read N- to C-terminus: MNTVRVTFLLVFVLAVSLGQADKDENRMEMQEKTEQGRSYLDFAENLLLQKLEELEAKLLEEDSEESRNSRQKRCIGEGVPCDENDPRCCSGLVCLKPTLHGIWYKSYYCYKK.

An N-terminal signal peptide occupies residues 1-21; the sequence is MNTVRVTFLLVFVLAVSLGQA. Residues 22–74 constitute a propeptide that is removed on maturation; sequence DKDENRMEMQEKTEQGRSYLDFAENLLLQKLEELEAKLLEEDSEESRNSRQKR. The tract at residues 61–83 is disordered; it reads EEDSEESRNSRQKRCIGEGVPCD. 3 disulfide bridges follow: cysteine 75–cysteine 90, cysteine 82–cysteine 95, and cysteine 89–cysteine 110.

Belongs to the neurotoxin 14 (magi-1) family. 01 (HNTX-16) subfamily. As to expression, expressed by the venom gland.

Its subcellular location is the secreted. Functionally, probable ion channel inhibitor. This chain is U11-theraphotoxin-Hhn1a, found in Cyriopagopus hainanus (Chinese bird spider).